The following is a 618-amino-acid chain: Acetolactate synthase (618 aa).

The tract at residues M1–P30 is disordered. E85 provides a ligand contact to thiamine diphosphate. FAD is bound by residues R187, H293 to R314, and D336 to D355. Residues Q429 to N509 are thiamine pyrophosphate binding. Mg(2+) contacts are provided by D480 and N507.

The protein belongs to the TPP enzyme family. It depends on Mg(2+) as a cofactor. The cofactor is thiamine diphosphate.

The catalysed reaction is 2 pyruvate + H(+) = (2S)-2-acetolactate + CO2. Its pathway is amino-acid biosynthesis; L-isoleucine biosynthesis; L-isoleucine from 2-oxobutanoate: step 1/4. It functions in the pathway amino-acid biosynthesis; L-valine biosynthesis; L-valine from pyruvate: step 1/4. The sequence is that of Acetolactate synthase (ilvB) from Mycobacterium bovis (strain ATCC BAA-935 / AF2122/97).